Consider the following 458-residue polypeptide: Elongation factor 1-alpha (458 aa).

N,N,N-trimethylglycine; by EFM7 is present on Gly-2. Lys-3 bears the N6,N6-dimethyllysine; by EFM7; alternate mark. N6-methyllysine; by EFM7; alternate is present on Lys-3. A tr-type G domain is found at 5 to 240 (KSHINVVVIG…DAIEQPSRPT (236 aa)). Residues 14–21 (GHVDSGKS) are G1. Ser-18 bears the Phosphoserine mark. Ser-21 and Thr-22 together coordinate GTP. The residue at position 30 (Lys-30) is an N6-methyllysine; by EFM1. The G2 stretch occupies residues 70–74 (GITID). A Phosphothreonine modification is found at Thr-72. Lys-79 is subject to N6,N6,N6-trimethyllysine; by EFM5. At Thr-82 the chain carries Phosphothreonine. The segment at 91-94 (DAPG) is G3. GTP-binding residues include Asn-153, Lys-154, and Asp-156. The segment at 153–156 (NKMD) is G4. Position 163 is a phosphoserine (Ser-163). The GTP site is built by Ser-192, Gly-193, and Trp-194. The segment at 192 to 194 (SGW) is G5. Residues Lys-224, Lys-242, and Lys-253 each participate in a glycyl lysine isopeptide (Lys-Gly) (interchain with G-Cter in ubiquitin) cross-link. At Thr-259 the chain carries Phosphothreonine. Lys-271 is covalently cross-linked (Glycyl lysine isopeptide (Lys-Gly) (interchain with G-Cter in ubiquitin)). Ser-289 is subject to Phosphoserine. Lys-316 carries the post-translational modification N6,N6-dimethyllysine; by EFM4; alternate. Lys-316 carries the N6-methyllysine; by EFM4; alternate modification. Lys-390 carries the post-translational modification N6-methyllysine; by EFM6. Lys-393 participates in a covalent cross-link: Glycyl lysine isopeptide (Lys-Gly) (interchain with G-Cter in ubiquitin). Ser-414 carries the phosphoserine modification. Position 430 is a phosphothreonine (Thr-430). Lys-437 is covalently cross-linked (Glycyl lysine isopeptide (Lys-Gly) (interchain with G-Cter in ubiquitin)). Lys-458 carries the lysine methyl ester modification.

This sequence belongs to the TRAFAC class translation factor GTPase superfamily. Classic translation factor GTPase family. EF-Tu/EF-1A subfamily. In terms of assembly, the eukaryotic elongation factor 1 complex (eEF1) is probably a heterohexamer. Two trimeric complexes, each composed of eEF1A (TEF1 or TEF2), eEF1Balpha (EFB1) and eEF1Bgamma (CAM1 or TEF4), are probably dimerized via the eF1Bgamma subunits. Interacts with eEF1Balpha; the interaction is direct. Interacts with GCN2 (via C-terminus); this interaction is direct, occurs in amino acid-repleted cells, may be stabilized in a ribosome-dependent manner, reduces GCN2-mediated eIF-2-alpha phosphorylation and is lost in amino acid-starved cells and by uncharged tRNAs. Interacts with CEX1. Interacts with elongation factor 3 (YEF3 or HEF3). Interacts with NAP1. Interacts with SRV2. Interacts with chaperone ZPR1; the interaction is required for its proper folding. Binds to actin and forms a ternary complex with BNI1 and profilin. Interacts with the proteasome, probably via RPT1. Associates with ribosomes. S-thiolated in response to oxidative stress, probably inhibiting the protein and causing a reduction in protein synthesis. Post-translationally, glutaminylated at Glu-45. An L-glutamine is linked to Glu-45 via the alpha amino group. This glutaminylation is yeast-specific and not essential for the normal functions of eEF1A. However, eEF1A glutaminylation slightly reduced growth under antibiotic-induced translational stress conditions.

Its subcellular location is the cytoplasm. The protein localises to the cytoskeleton. Its pathway is protein biosynthesis; polypeptide chain elongation. Its activity is regulated as follows. Inhibited by narciclasine. Its function is as follows. GTP-binding component of the eukaryotic elongation factor 1 complex (eEF1). In its active GTP-bound form, binds to and delivers aminoacyl-tRNA to the A-site of ribosomes during protein biosynthesis. In the presence of a correct codon-anticodon match between the aminoacyl-tRNA and the A-site codon of the ribosome-bound mRNA, the ribosome acts as a GTPase activator and the GTP is hydrolyzed. The inactive GDP-bound form leaves the ribosome and must be recycled by its guanine nucleotide exchange factor (GEF) (eEF1B subcomplex) before binding another molecule of aminoacyl-tRNA. Required for nuclear export of aminoacyl-tRNAs. May also be involved in translational quality control by targeting cotranslationally damaged proteins to the proteasome. Also exhibits actin filament-binding and -bundling activities and is involved in cytoskeleton organization. Plays a role as a negative regulator of GCN2 kinase activity by inhibiting GCN2-mediated eIF-2-alpha phosphorylation in amino acid-repleted cells. The sequence is that of Elongation factor 1-alpha (TEF1) from Saccharomyces cerevisiae (strain ATCC 204508 / S288c) (Baker's yeast).